Here is a 392-residue protein sequence, read N- to C-terminus: HORMA domain-containing protein 1 (392 aa).

The 203-residue stretch at 25 to 227 (HQSLMFVKRL…TPFHTFRLKV (203 aa)) folds into the HORMA domain. Residues 323-359 (SELDVSESKTRSGKIFQSKMVNGNNQQGQTSKENRKR) are disordered. Residues 341–353 (KMVNGNNQQGQTS) show a composition bias toward polar residues. Ser-375 carries the post-translational modification Phosphoserine. A Nuclear localization signal motif is present at residues 381-384 (KKRR).

As to quaternary structure, interacts with HORMAD2. Interacts with IHO1. Phosphorylated at Ser-375 in a SPO11-dependent manner. In terms of tissue distribution, specifically expressed in meiotic germ cells.

The protein localises to the nucleus. It is found in the chromosome. The protein resides in the cytoplasm. Functionally, plays a key role in meiotic progression. Regulates 3 different functions during meiosis: ensures that sufficient numbers of processed DNA double-strand breaks (DSBs) are available for successful homology search by increasing the steady-state numbers of single-stranded DSB ends. Promotes synaptonemal-complex formation independently of its role in homology search. Plays a key role in the male mid-pachytene checkpoint and the female meiotic prophase checkpoint: required for efficient build-up of ATR activity on unsynapsed chromosome regions, a process believed to form the basis of meiotic silencing of unsynapsed chromatin (MSUC) and meiotic prophase quality control in both sexes. This chain is HORMA domain-containing protein 1, found in Mus musculus (Mouse).